The primary structure comprises 131 residues: Translation initiation factor 5A (131 aa).

Hypusine is present on Lys36.

It belongs to the eIF-5A family.

It localises to the cytoplasm. Functions by promoting the formation of the first peptide bond. This is Translation initiation factor 5A (eIF5A) from Metallosphaera sedula (strain ATCC 51363 / DSM 5348 / JCM 9185 / NBRC 15509 / TH2).